Reading from the N-terminus, the 215-residue chain is Peroxiredoxin-5, mitochondrial (215 aa).

Residues 1–53 (MGLAGVCVLRRSAGYILGGAARQSVAATAAARRRSEGGWASGGVRSFSRAAAA) constitute a mitochondrion transit peptide. A Thioredoxin domain is found at 57–215 (IKVGDAIPAV…SLAPSIISQL (159 aa)). An N6-acetyllysine modification is found at K76. K84 bears the N6-acetyllysine; alternate mark. The residue at position 84 (K84) is an N6-succinyllysine; alternate. Residue C101 is the Cysteine sulfenic acid (-SOH) intermediate of the active site. C101 is lipidated: S-palmitoyl cysteine. An intrachain disulfide couples C101 to C205. Residue K117 is modified to N6-succinyllysine. Residues S172 and S183 each carry the phosphoserine modification. The short motif at 213 to 215 (SQL) is the Microbody targeting signal element.

This sequence belongs to the peroxiredoxin family. Prx5 subfamily. As to quaternary structure, monomer. S-palmitoylated. Palmitoylation occurs on the active site, inhibiting its reactivity; therefore PRDX5 palmitoylation status determines its antioxidant capacity. Post-translationally, S-palmitoylated. Depalmitoylated by ABHD10.

It is found in the mitochondrion. It localises to the cytoplasm. The protein localises to the peroxisome matrix. The enzyme catalyses a hydroperoxide + [thioredoxin]-dithiol = an alcohol + [thioredoxin]-disulfide + H2O. Functionally, thiol-specific peroxidase that catalyzes the reduction of hydrogen peroxide and organic hydroperoxides to water and alcohols, respectively. Plays a role in cell protection against oxidative stress by detoxifying peroxides and as sensor of hydrogen peroxide-mediated signaling events. The protein is Peroxiredoxin-5, mitochondrial (PRDX5) of Chlorocebus aethiops (Green monkey).